Consider the following 165-residue polypeptide: Probable calcium-binding protein CML18 (165 aa).

4 EF-hand domains span residues 16-51 (EQLA…LGLK), 52-87 (PSQD…DLVK), 90-125 (YTDD…LGHA), and 126-161 (LTAE…AAFD). Aspartate 29, asparagine 31, aspartate 33, serine 35, glutamate 40, aspartate 65, asparagine 67, asparagine 69, glutamate 76, aspartate 103, aspartate 105, asparagine 107, tyrosine 109, glutamate 114, aspartate 139, aspartate 141, aspartate 143, cysteine 145, and glutamate 150 together coordinate Ca(2+).

Calcium and pH-dependent interaction with NHX1 (increases when pH decreases, better at pH 5.5 than at pH 7.5). Also interacts with the CPB protein At2g18750.

The protein localises to the vacuole. Its function is as follows. Potential calcium sensor that modulates ion selectivity of NHX1. The sequence is that of Probable calcium-binding protein CML18 (CML18) from Arabidopsis thaliana (Mouse-ear cress).